The following is a 137-amino-acid chain: MAVKIRLKRLGKIRAPYYRIVVADSRTKRDGRVIEEIGKYHPTEEPSFIEVQSERAQYWLSVGAQPTEQVEALLKLTGDWGRFKGDKDAVSTVRVREAKPAYVADEKKKPVLKPKTEKAAPAPEAAAPEAESTEEQA.

A compositionally biased stretch (basic and acidic residues) spans 104-118 (ADEKKKPVLKPKTEK). The tract at residues 104–137 (ADEKKKPVLKPKTEKAAPAPEAAAPEAESTEEQA) is disordered. Over residues 119–130 (AAPAPEAAAPEA) the composition is skewed to low complexity.

Belongs to the bacterial ribosomal protein bS16 family.

In Clavibacter michiganensis subsp. michiganensis (strain NCPPB 382), this protein is Small ribosomal subunit protein bS16.